Reading from the N-terminus, the 158-residue chain is 6,7-dimethyl-8-ribityllumazine synthase (158 aa).

Residues Phe-23, 61–63, and 85–87 each bind 5-amino-6-(D-ribitylamino)uracil; these read SFE and AVI. 90-91 lines the (2S)-2-hydroxy-3-oxobutyl phosphate pocket; the sequence is ET. The active-site Proton donor is His-93. Phe-118 contributes to the 5-amino-6-(D-ribitylamino)uracil binding site. Arg-132 provides a ligand contact to (2S)-2-hydroxy-3-oxobutyl phosphate.

This sequence belongs to the DMRL synthase family.

It catalyses the reaction (2S)-2-hydroxy-3-oxobutyl phosphate + 5-amino-6-(D-ribitylamino)uracil = 6,7-dimethyl-8-(1-D-ribityl)lumazine + phosphate + 2 H2O + H(+). It participates in cofactor biosynthesis; riboflavin biosynthesis; riboflavin from 2-hydroxy-3-oxobutyl phosphate and 5-amino-6-(D-ribitylamino)uracil: step 1/2. Functionally, catalyzes the formation of 6,7-dimethyl-8-ribityllumazine by condensation of 5-amino-6-(D-ribitylamino)uracil with 3,4-dihydroxy-2-butanone 4-phosphate. This is the penultimate step in the biosynthesis of riboflavin. This chain is 6,7-dimethyl-8-ribityllumazine synthase, found in Prochlorococcus marinus (strain MIT 9215).